The sequence spans 529 residues: Peptide chain release factor 3 (529 aa).

The 269-residue stretch at alanine 10–glutamine 278 folds into the tr-type G domain. GTP-binding positions include serine 19–threonine 26, aspartate 87–histidine 91, and asparagine 141–aspartate 144.

This sequence belongs to the TRAFAC class translation factor GTPase superfamily. Classic translation factor GTPase family. PrfC subfamily.

It is found in the cytoplasm. Functionally, increases the formation of ribosomal termination complexes and stimulates activities of RF-1 and RF-2. It binds guanine nucleotides and has strong preference for UGA stop codons. It may interact directly with the ribosome. The stimulation of RF-1 and RF-2 is significantly reduced by GTP and GDP, but not by GMP. The protein is Peptide chain release factor 3 of Nitratidesulfovibrio vulgaris (strain DSM 19637 / Miyazaki F) (Desulfovibrio vulgaris).